Reading from the N-terminus, the 427-residue chain is 5-hydroxybenzimidazole synthase BzaA (427 aa).

This sequence belongs to the ThiC family. 5-hydroxybenzimidazole synthase subfamily. [4Fe-4S] cluster is required as a cofactor.

The catalysed reaction is 5-amino-1-(5-phospho-beta-D-ribosyl)imidazole + AH2 + S-adenosyl-L-methionine = 5-hydroxybenzimidazole + 5'-deoxyadenosine + formate + L-methionine + A + NH4(+) + phosphate + 2 H(+). Its pathway is cofactor biosynthesis; adenosylcobalamin biosynthesis. Together with BzaB, catalyzes the conversion of aminoimidazole ribotide (AIR) to 5-hydroxybenzimidazole (5-HBI) in a radical S-adenosyl-L-methionine (SAM)-dependent reaction. Is thus involved in the anaerobic biosynthesis of dimethylbenzimidazole (DMB), the lower axial ligand of vitamin B12 (cobalamin). Requires BzaB for catalytic activity, as BzaA alone displays no activity. The sequence is that of 5-hydroxybenzimidazole synthase BzaA from Eubacterium limosum.